The primary structure comprises 764 residues: E3 ubiquitin-protein ligase CBL-B-B (764 aa).

A compositionally biased stretch (low complexity) spans 1–19 (MASSSSSSSNSSTSSSALS). A disordered region spans residues 1-27 (MASSSSSSSNSSTSSSALSGRLPGARS). A 4H region spans residues 48–180 (PPKQAAADRR…KAIFPSGQFQ (133 aa)). A Cbl-PTB domain is found at 48-356 (PPKQAAADRR…GRSYNPDLTD (309 aa)). An EF-hand-like region spans residues 181–253 (GDTFRITKAD…FEFDIFARLF (73 aa)). Residues D234, T236, N238, Y240, and E245 each contribute to the Ca(2+) site. The tract at residues 254–356 (QPWSSILRNW…GRSYNPDLTD (103 aa)) is SH2-like. 4-O-phospho-L-tyrosine is bound at residue R299. Residues 357-385 (LCEPTPHDHIKVTQEQYELYCEMGSTFQL) form a linker region. The RING-type zinc finger occupies 386–425 (CKICAENDKDVKIEPCGHLMCTSCLTSWQESDGQGCPFCR). Disordered regions lie at residues 482 to 583 (MNER…SRTC) and 707 to 726 (KVRN…SSHP). The span at 485-498 (RQNSPVTSPGSSPL) shows a compositional bias: polar residues. Residues 556–578 (LPAPPPPLREPPPPPERPPPIPP) are compositionally biased toward pro residues.

As to quaternary structure, interacts with several SH3 domain-containing proteins and with poly-ubiquitinated proteins.

The protein resides in the cytoplasm. It catalyses the reaction S-ubiquitinyl-[E2 ubiquitin-conjugating enzyme]-L-cysteine + [acceptor protein]-L-lysine = [E2 ubiquitin-conjugating enzyme]-L-cysteine + N(6)-ubiquitinyl-[acceptor protein]-L-lysine.. The protein operates within protein modification; protein ubiquitination. In terms of biological role, E3 ubiquitin-protein ligase which accepts ubiquitin from specific E2 ubiquitin-conjugating enzymes, and transfers it to substrates, generally promoting their degradation by the proteasome. In Xenopus laevis (African clawed frog), this protein is E3 ubiquitin-protein ligase CBL-B-B (cblb-b).